Here is a 55-residue protein sequence, read N- to C-terminus: Large ribosomal subunit protein bL33 (55 aa).

It belongs to the bacterial ribosomal protein bL33 family.

The protein is Large ribosomal subunit protein bL33 of Xanthomonas oryzae pv. oryzae (strain PXO99A).